The primary structure comprises 209 residues: Glycerol-3-phosphate acyltransferase (209 aa).

5 helical membrane passes run 13-33 (ALIA…GLLL), 63-83 (LAAA…LIAQ), 94-114 (PGLL…WLGF), 127-147 (LLGI…SIAF), and 151-171 (YSSL…WILG).

The protein belongs to the PlsY family. As to quaternary structure, probably interacts with PlsX.

The protein resides in the cell inner membrane. It carries out the reaction an acyl phosphate + sn-glycerol 3-phosphate = a 1-acyl-sn-glycero-3-phosphate + phosphate. Its pathway is lipid metabolism; phospholipid metabolism. In terms of biological role, catalyzes the transfer of an acyl group from acyl-phosphate (acyl-PO(4)) to glycerol-3-phosphate (G3P) to form lysophosphatidic acid (LPA). This enzyme utilizes acyl-phosphate as fatty acyl donor, but not acyl-CoA or acyl-ACP. This chain is Glycerol-3-phosphate acyltransferase, found in Allorhizobium ampelinum (strain ATCC BAA-846 / DSM 112012 / S4) (Agrobacterium vitis (strain S4)).